The primary structure comprises 433 residues: 26S proteasome regulatory subunit 7 (433 aa).

A disordered region spans residues 1-22; that stretch reads MPDYLGADQRKTKEDEKDDKPI. Basic and acidic residues predominate over residues 8-22; sequence DQRKTKEDEKDDKPI. Lys116 bears the N6-acetyllysine mark. 216 to 223 contacts ATP; that stretch reads GPPGTGKT. N6-acetyllysine is present on Lys422.

This sequence belongs to the AAA ATPase family. In terms of assembly, component of the 19S proteasome regulatory particle complex. The 26S proteasome consists of a 20S core particle (CP) and two 19S regulatory subunits (RP). The regulatory particle is made of a lid composed of 9 subunits, a base containing 6 ATPases including PSMC2 and few additional components. Interacts with NDC80/HEC; this interaction is detected only during M phase. Interacts and SQSTM1. Interacts with PAAF1. Directly interacts with TRIM5. Monoubiquitinated by RNF181. Post-translationally, phosphorylated. Dephosphorylated by UBLCP1 which impairs PSMC2 ATPase activity and disrupts 26S proteasome assembly.

It is found in the cytoplasm. It localises to the nucleus. Its function is as follows. Component of the 26S proteasome, a multiprotein complex involved in the ATP-dependent degradation of ubiquitinated proteins. This complex plays a key role in the maintenance of protein homeostasis by removing misfolded or damaged proteins, which could impair cellular functions, and by removing proteins whose functions are no longer required. Therefore, the proteasome participates in numerous cellular processes, including cell cycle progression, apoptosis, or DNA damage repair. PSMC2 belongs to the heterohexameric ring of AAA (ATPases associated with diverse cellular activities) proteins that unfolds ubiquitinated target proteins that are concurrently translocated into a proteolytic chamber and degraded into peptides. The chain is 26S proteasome regulatory subunit 7 (PSMC2) from Pongo abelii (Sumatran orangutan).